The primary structure comprises 306 residues: tRNA pseudouridine synthase B (306 aa).

Aspartate 43 serves as the catalytic Nucleophile.

The protein belongs to the pseudouridine synthase TruB family. Type 1 subfamily.

The enzyme catalyses uridine(55) in tRNA = pseudouridine(55) in tRNA. Functionally, responsible for synthesis of pseudouridine from uracil-55 in the psi GC loop of transfer RNAs. The polypeptide is tRNA pseudouridine synthase B (Lacticaseibacillus casei (strain BL23) (Lactobacillus casei)).